Here is a 235-residue protein sequence, read N- to C-terminus: NAD(P)H-hydrate epimerase (235 aa).

The YjeF N-terminal domain occupies 12 to 218; it reads AIVMDQLLMG…EFLKETNLTI (207 aa). A (6S)-NADPHX-binding site is contributed by 62–66; the sequence is NNGGD. Residues Asn63 and Asp127 each coordinate K(+). Residues 131–137 and Asp161 each bind (6S)-NADPHX; that span reads GYSFKGD. Ser164 lines the K(+) pocket.

Belongs to the NnrE/AIBP family. It depends on K(+) as a cofactor.

It carries out the reaction (6R)-NADHX = (6S)-NADHX. The enzyme catalyses (6R)-NADPHX = (6S)-NADPHX. In terms of biological role, catalyzes the epimerization of the S- and R-forms of NAD(P)HX, a damaged form of NAD(P)H that is a result of enzymatic or heat-dependent hydration. This is a prerequisite for the S-specific NAD(P)H-hydrate dehydratase to allow the repair of both epimers of NAD(P)HX. The sequence is that of NAD(P)H-hydrate epimerase from Dictyostelium discoideum (Social amoeba).